Here is a 524-residue protein sequence, read N- to C-terminus: Metal transporter Nramp2 (524 aa).

The segment at 34–58 (AYDSDDKVSIAVSDSDSEDGGGGGG) is disordered. The next 12 membrane-spanning stretches (helical) occupy residues 70–90 (LWRFTGPGFLMCIAFLDPGNL), 98–118 (AAAGYQLLWLLLWATVMGALV), 155–175 (LALVGADIQEVIGSAIAIKIL), 179–199 (TVPLWGGVVITAFDCFIFLFL), 207–227 (LEAFFGVLIAVMAVSFAIMFG), 253–273 (AVGIVGCIIMPHNVFLHSALV), 295–315 (IESILALIVSFFINICVTTVF), 341–361 (YGTAFFPILYIWAIGLLASGQ), 389–409 (AMITRSFAIIPTMIVALFFDT), 420–440 (ALNVLQSIQIPFALIPLITLV), 457–477 (VISWIVTVFLMLINGYLILSF), and 486–506 (LVRSSLCVVLAVYLAFIVYLI).

The protein belongs to the NRAMP (TC 2.A.55) family.

It is found in the membrane. In terms of biological role, probable metal transporter. The polypeptide is Metal transporter Nramp2 (NRAMP2) (Oryza sativa subsp. japonica (Rice)).